The following is a 240-amino-acid chain: Uridylate kinase (240 aa).

13-16 (KLSG) lines the ATP pocket. The tract at residues 21-26 (GDDGFG) is involved in allosteric activation by GTP. A UMP-binding site is contributed by Gly55. ATP contacts are provided by Gly56 and Arg60. UMP is bound by residues Asp75 and 136-143 (IGNPYFST). ATP contacts are provided by Asn164, Tyr170, and Asp173.

Belongs to the UMP kinase family. Homohexamer.

The protein localises to the cytoplasm. The catalysed reaction is UMP + ATP = UDP + ADP. Its pathway is pyrimidine metabolism; CTP biosynthesis via de novo pathway; UDP from UMP (UMPK route): step 1/1. With respect to regulation, allosterically activated by GTP. Inhibited by UTP. Catalyzes the reversible phosphorylation of UMP to UDP. The sequence is that of Uridylate kinase from Staphylococcus saprophyticus subsp. saprophyticus (strain ATCC 15305 / DSM 20229 / NCIMB 8711 / NCTC 7292 / S-41).